A 65-amino-acid polypeptide reads, in one-letter code: Hirudin-3A' (65 aa).

Residues 1–3 (VVY) are interaction with thrombin active site. 3 disulfide bridges follow: Cys-6-Cys-14, Cys-16-Cys-28, and Cys-22-Cys-39. The tract at residues 32–65 (SDGEKNECVTGEGTPKPQSHNDGDFEEIPEEYLQ) is disordered. O-linked (GalNAc...) threonine glycosylation is present at Thr-45. The segment at 55–65 (DFEEIPEEYLQ) is interaction with fibrinogen-binding exosite of thrombin. Acidic residues predominate over residues 55–65 (DFEEIPEEYLQ). Tyr-63 carries the sulfotyrosine modification.

This sequence belongs to the protease inhibitor I14 (hirudin) family.

It localises to the secreted. Its function is as follows. Hirudin is a potent thrombin-specific protease inhibitor. It forms a stable non-covalent complex with alpha-thrombin, thereby abolishing its ability to cleave fibrinogen. In Hirudo medicinalis (Medicinal leech), this protein is Hirudin-3A'.